The sequence spans 106 residues: Iron-sulfur cluster assembly protein CyaY (106 aa).

The protein belongs to the frataxin family.

Its function is as follows. Involved in iron-sulfur (Fe-S) cluster assembly. May act as a regulator of Fe-S biogenesis. This is Iron-sulfur cluster assembly protein CyaY from Shigella flexneri serotype 5b (strain 8401).